Consider the following 439-residue polypeptide: Apolipoprotein N-acyltransferase (439 aa).

The next 6 helical transmembrane spans lie at leucine 13–phenylalanine 33, leucine 47–isoleucine 67, phenylalanine 75–leucine 95, tyrosine 97–valine 117, asparagine 149–phenylalanine 169, and isoleucine 175–tyrosine 195. Residues isoleucine 207–phenylalanine 439 form the CN hydrolase domain. Glutamate 248 functions as the Proton acceptor in the catalytic mechanism. Residue lysine 305 is part of the active site. Cysteine 355 serves as the catalytic Nucleophile.

The protein belongs to the CN hydrolase family. Apolipoprotein N-acyltransferase subfamily.

The protein resides in the cell inner membrane. It catalyses the reaction N-terminal S-1,2-diacyl-sn-glyceryl-L-cysteinyl-[lipoprotein] + a glycerophospholipid = N-acyl-S-1,2-diacyl-sn-glyceryl-L-cysteinyl-[lipoprotein] + a 2-acyl-sn-glycero-3-phospholipid + H(+). Its pathway is protein modification; lipoprotein biosynthesis (N-acyl transfer). Functionally, catalyzes the phospholipid dependent N-acylation of the N-terminal cysteine of apolipoprotein, the last step in lipoprotein maturation. This chain is Apolipoprotein N-acyltransferase, found in Aquifex aeolicus (strain VF5).